We begin with the raw amino-acid sequence, 70 residues long: Large ribosomal subunit protein bL28c (70 aa).

The protein belongs to the bacterial ribosomal protein bL28 family.

Its subcellular location is the plastid. The protein resides in the cyanelle. The sequence is that of Large ribosomal subunit protein bL28c (rpl28) from Cyanophora paradoxa.